Reading from the N-terminus, the 165-residue chain is Large ribosomal subunit protein uL15 (165 aa).

Residues 1–44 form a disordered region; that stretch reads MSLNQLKAPRGANRAKKRVGRGQGSGLGKTAGRGGKGQKARSGN. The segment covering 21–37 has biased composition (gly residues); sequence RGQGSGLGKTAGRGGKG.

The protein belongs to the universal ribosomal protein uL15 family. As to quaternary structure, part of the 50S ribosomal subunit.

Functionally, binds to the 23S rRNA. The polypeptide is Large ribosomal subunit protein uL15 (Anaeromyxobacter dehalogenans (strain 2CP-C)).